We begin with the raw amino-acid sequence, 587 residues long: 5-aminolevulinate synthase, erythroid-specific, mitochondrial (587 aa).

Residues 1-49 constitute a mitochondrion transit peptide; the sequence is MVAAAMLLRSCPVLSKGPTGLLGKVAKTYQFLFGIGRCPILATQGPTCS. Residue Arg-163 participates in succinyl-CoA binding. 2 residues coordinate pyridoxal 5'-phosphate: Cys-258 and Phe-259. Residues Ser-280 and Lys-299 each contribute to the succinyl-CoA site. Pyridoxal 5'-phosphate is bound by residues Ser-332, His-360, and Thr-388. Lys-391 is an active-site residue. Lys-391 bears the N6-(pyridoxal phosphate)lysine mark. Positions 420 and 421 each coordinate pyridoxal 5'-phosphate. Succinyl-CoA is bound at residue Thr-508.

This sequence belongs to the class-II pyridoxal-phosphate-dependent aminotransferase family. As to quaternary structure, homodimer. Interacts with SUCLA2. It depends on pyridoxal 5'-phosphate as a cofactor. Erythroid-specific.

It localises to the mitochondrion inner membrane. It carries out the reaction succinyl-CoA + glycine + H(+) = 5-aminolevulinate + CO2 + CoA. It participates in porphyrin-containing compound metabolism; protoporphyrin-IX biosynthesis; 5-aminolevulinate from glycine: step 1/1. In terms of biological role, catalyzes the pyridoxal 5'-phosphate (PLP)-dependent condensation of succinyl-CoA and glycine to form aminolevulinic acid (ALA), with CoA and CO2 as by-products. Contributes significantly to heme formation during erythropoiesis. This Rattus norvegicus (Rat) protein is 5-aminolevulinate synthase, erythroid-specific, mitochondrial (Alas2).